The primary structure comprises 180 residues: MLPNAMASNHVMPSGAPPVLPKADYRNAMARLGAAVNIITTDGPAGRAGFTASAVCSVTDEPPMLLVCLNRSASVYPAFTANGVLCVNVLAAGHQALSGLFGGKTPMDERFAAGRWSRKATGSPVLEDAAASFDCRVVQATSAGTHDVLFCEALAIAIGGAAQSLIYFDRRYHEIAAPPH.

The protein belongs to the non-flavoprotein flavin reductase family. RutF subfamily.

It catalyses the reaction FMNH2 + NAD(+) = FMN + NADH + 2 H(+). Catalyzes the reduction of FMN to FMNH2 which is used to reduce pyrimidine by RutA via the Rut pathway. This is FMN reductase (NADH) RutF from Variovorax paradoxus (strain S110).